The chain runs to 599 residues: Adenine deaminase (599 aa).

The disordered stretch occupies residues 1–31 (MARSNRRGGRGDPEDDPAWAPPGHRCAGERA).

This sequence belongs to the metallo-dependent hydrolases superfamily. Adenine deaminase family. The cofactor is Mn(2+).

It carries out the reaction adenine + H2O + H(+) = hypoxanthine + NH4(+). The protein is Adenine deaminase of Methanopyrus kandleri (strain AV19 / DSM 6324 / JCM 9639 / NBRC 100938).